The sequence spans 213 residues: ATP phosphoribosyltransferase (213 aa).

This sequence belongs to the ATP phosphoribosyltransferase family. Short subfamily. As to quaternary structure, heteromultimer composed of HisG and HisZ subunits.

Its subcellular location is the cytoplasm. It carries out the reaction 1-(5-phospho-beta-D-ribosyl)-ATP + diphosphate = 5-phospho-alpha-D-ribose 1-diphosphate + ATP. It participates in amino-acid biosynthesis; L-histidine biosynthesis; L-histidine from 5-phospho-alpha-D-ribose 1-diphosphate: step 1/9. Functionally, catalyzes the condensation of ATP and 5-phosphoribose 1-diphosphate to form N'-(5'-phosphoribosyl)-ATP (PR-ATP). Has a crucial role in the pathway because the rate of histidine biosynthesis seems to be controlled primarily by regulation of HisG enzymatic activity. This Nitrosococcus oceani (strain ATCC 19707 / BCRC 17464 / JCM 30415 / NCIMB 11848 / C-107) protein is ATP phosphoribosyltransferase.